Reading from the N-terminus, the 526-residue chain is GMP synthase [glutamine-hydrolyzing] (526 aa).

Positions 8–208 constitute a Glutamine amidotransferase type-1 domain; it reads CILIIDFGSQ…AVDICRCEVT (201 aa). Residue cysteine 85 is the Nucleophile of the active site. Residues histidine 182 and glutamate 184 contribute to the active site. Residues 209 to 401 form the GMPS ATP-PPase domain; sequence WKPVYIVKNI…LGLPLNVVNQ (193 aa). Residue 236–242 participates in ATP binding; the sequence is SGGIDSL.

As to quaternary structure, homodimer.

It carries out the reaction XMP + L-glutamine + ATP + H2O = GMP + L-glutamate + AMP + diphosphate + 2 H(+). It participates in purine metabolism; GMP biosynthesis; GMP from XMP (L-Gln route): step 1/1. In terms of biological role, catalyzes the synthesis of GMP from XMP. This chain is GMP synthase [glutamine-hydrolyzing], found in Blochmanniella floridana.